The following is a 213-amino-acid chain: Amelotin (213 aa).

Positions 1–16 are cleaved as a signal peptide; it reads MKTMILLLCLLGSAQS. 2 disordered regions span residues 22–43 and 162–213; these read NPAS…LPQQ and GAKA…NRTQ. The span at 33–43 shows a compositional bias: polar residues; the sequence is TPGQVTPLPQQ. A compositionally biased stretch (low complexity) spans 169–180; sequence GTTPGHVTTPGV.

The protein belongs to the amelotin family. Phosphorylated by FAM20C in vitro. In terms of processing, O-glycosylated. As to expression, specifically expressed in maturation-stage ameloblasts.

The protein localises to the secreted. Functionally, is a promoter of calcium phosphate mineralization, playing a critical role in the formation of the compact, mineralized, aprismatic enamel surface layer during the maturation stage of amelogenesis. This Mus musculus (Mouse) protein is Amelotin (Amtn).